The primary structure comprises 80 residues: Small ribosomal subunit protein bS18 (80 aa).

Belongs to the bacterial ribosomal protein bS18 family. Part of the 30S ribosomal subunit. Forms a tight heterodimer with protein bS6.

Binds as a heterodimer with protein bS6 to the central domain of the 16S rRNA, where it helps stabilize the platform of the 30S subunit. This chain is Small ribosomal subunit protein bS18, found in Methylocella silvestris (strain DSM 15510 / CIP 108128 / LMG 27833 / NCIMB 13906 / BL2).